Here is a 151-residue protein sequence, read N- to C-terminus: uncharacterized protein (151 aa).

In terms of domain architecture, Nudix hydrolase spans 6–143; that stretch reads MKTLSAGIIF…QWQYVMGPSL (138 aa).

This is an uncharacterized protein from Escherichia coli (Bacteriophage T4).